Here is a 61-residue protein sequence, read N- to C-terminus: Small ribosomal subunit protein uS14 (61 aa).

4 residues coordinate Zn(2+): Cys-24, Cys-27, Cys-40, and Cys-43.

Belongs to the universal ribosomal protein uS14 family. Zinc-binding uS14 subfamily. As to quaternary structure, part of the 30S ribosomal subunit. Contacts proteins S3 and S10. Zn(2+) serves as cofactor.

Its function is as follows. Binds 16S rRNA, required for the assembly of 30S particles and may also be responsible for determining the conformation of the 16S rRNA at the A site. This chain is Small ribosomal subunit protein uS14, found in Pseudothermotoga lettingae (strain ATCC BAA-301 / DSM 14385 / NBRC 107922 / TMO) (Thermotoga lettingae).